Here is a 367-residue protein sequence, read N- to C-terminus: Peptide chain release factor 2 (367 aa).

Glutamine 249 carries the post-translational modification N5-methylglutamine.

The protein belongs to the prokaryotic/mitochondrial release factor family. In terms of processing, methylated by PrmC. Methylation increases the termination efficiency of RF2.

Its subcellular location is the cytoplasm. Peptide chain release factor 2 directs the termination of translation in response to the peptide chain termination codons UGA and UAA. This Thermotoga sp. (strain RQ2) protein is Peptide chain release factor 2.